Consider the following 699-residue polypeptide: Pollen-specific leucine-rich repeat extensin-like protein 4 (699 aa).

Positions 1-39 (MPFYKQPWVFSKVFVLAMAKPPSFGCCFFLLFFSFLSSS) are cleaved as a signal peptide. N-linked (GlcNAc...) asparagine glycosylation occurs at N106. 9 LRR repeats span residues 133 to 157 (VTVV…LGLM), 158 to 180 (TDVA…SFEK), 182 to 205 (KLMH…VLSW), 206 to 229 (PDVK…LFKK), 231 to 251 (LDAI…SLGE), 253 to 275 (PASV…IGNM), 276 to 299 (KNLN…IGKL), 301 to 323 (NVTV…FVGL), and 324 to 347 (TSVE…ICQL). N301 carries an N-linked (GlcNAc...) asparagine glycan. A glycan (N-linked (GlcNAc...) asparagine) is linked at N352. The interval 411–699 (KCAGGSSTPS…SPPPPMFAGY (289 aa)) is disordered. 4 stretches are compositionally biased toward pro residues: residues 421–466 (KPSP…PVPT), 482–504 (KPSP…PQPD), 518–659 (PPPA…PPAP), and 690–699 (SPPPPMFAGY). The interval 517–699 (SPPPAPVNSP…SPPPPMFAGY (183 aa)) is contains the Ser-Pro(4) repeats.

Post-translationally, hydroxylated on proline residues in the S-P-P-P-P repeat. In terms of processing, O-glycosylated on hydroxyprolines. Expressed in flowers, stamen, pollen, and pollinated carpels.

The protein resides in the secreted. Its subcellular location is the cell wall. Functionally, modulates cell morphogenesis by regulating cell wall formation and assembly, and/or growth polarization. This chain is Pollen-specific leucine-rich repeat extensin-like protein 4 (PEX4), found in Arabidopsis thaliana (Mouse-ear cress).